A 299-amino-acid chain; its full sequence is tRNA dimethylallyltransferase (299 aa).

10–17 (GPTAVGKT) is a binding site for ATP. Position 12–17 (12–17 (TAVGKT)) interacts with substrate. Residues 35-38 (DSQQ) are interaction with substrate tRNA.

This sequence belongs to the IPP transferase family. In terms of assembly, monomer. Mg(2+) is required as a cofactor.

It catalyses the reaction adenosine(37) in tRNA + dimethylallyl diphosphate = N(6)-dimethylallyladenosine(37) in tRNA + diphosphate. Catalyzes the transfer of a dimethylallyl group onto the adenine at position 37 in tRNAs that read codons beginning with uridine, leading to the formation of N6-(dimethylallyl)adenosine (i(6)A). The chain is tRNA dimethylallyltransferase from Streptococcus thermophilus (strain ATCC BAA-491 / LMD-9).